Reading from the N-terminus, the 394-residue chain is Choline/ethanolamine kinase (394 aa).

Ala-2 bears the N-acetylalanine mark. A disordered region spans residues 22–42 (GLLDAKCPEPIPNRRRSSSLS). Residues 75 to 81 (SGGLSNL), Arg-104, 146 to 152 (QYLPSRP), Gln-244, and Asp-264 contribute to the ATP site. A substrate-binding site is contributed by 77–79 (GLS).

It belongs to the choline/ethanolamine kinase family. As to quaternary structure, homodimer, and heterodimer with CHKA.

The enzyme catalyses choline + ATP = phosphocholine + ADP + H(+). It catalyses the reaction ethanolamine + ATP = phosphoethanolamine + ADP + H(+). The protein operates within phospholipid metabolism; phosphatidylethanolamine biosynthesis; phosphatidylethanolamine from ethanolamine: step 1/3. Has a key role in phospholipid metabolism, and catalyzes the first step of phosphatidylethanolamine and phosphatidylcholine biosynthesis. The chain is Choline/ethanolamine kinase (Chkb) from Rattus norvegicus (Rat).